A 246-amino-acid chain; its full sequence is Probable transcriptional regulatory protein YebC (246 aa).

A disordered region spans residues 1 to 20; the sequence is MAGHSKWANTRHRKAAQDAK.

Belongs to the TACO1 family.

Its subcellular location is the cytoplasm. This chain is Probable transcriptional regulatory protein YebC, found in Salmonella choleraesuis (strain SC-B67).